A 462-amino-acid polypeptide reads, in one-letter code: Cysteine--tRNA ligase (462 aa).

Zn(2+) is bound at residue Cys29. The 'HIGH' region signature appears at 31–41; the sequence is PTVYDHAHIGN. Zn(2+) is bound by residues Cys214, His239, and Glu243. Positions 272–276 match the 'KMSKS' region motif; that stretch reads KMSKS. Residue Lys275 participates in ATP binding.

This sequence belongs to the class-I aminoacyl-tRNA synthetase family. Monomer. Zn(2+) serves as cofactor.

Its subcellular location is the cytoplasm. The enzyme catalyses tRNA(Cys) + L-cysteine + ATP = L-cysteinyl-tRNA(Cys) + AMP + diphosphate. This is Cysteine--tRNA ligase from Azorhizobium caulinodans (strain ATCC 43989 / DSM 5975 / JCM 20966 / LMG 6465 / NBRC 14845 / NCIMB 13405 / ORS 571).